The chain runs to 244 residues: MTLDLDATKKDDKLLITTIQQEYKILAEYKMIESEKLSGIYVIPSYVNSLQWFGVFFGRQGLYMESVFRFTILLPDRFPDDKSLPTIIFQQDVIHPHVCPYTHSLDVSHAFPEWRCGEDHLWQLLKYLQAIFSDPLDSIRGIEVDKLKNSEAAELLITNKEEYMARVQKNIKESKDHIFDTPPTEDPHYIVFEKFQQDVHGPVLERIKAGRSKQTEPSVQQANGGHATGLSWVKEGEFKPLSIE.

The UBC core domain maps to 20-176; the sequence is QQEYKILAEY…VQKNIKESKD (157 aa).

Belongs to the ubiquitin-conjugating enzyme family. FTS subfamily.

This is Protein crossbronx (cbx) from Drosophila yakuba (Fruit fly).